We begin with the raw amino-acid sequence, 355 residues long: Protein RecA (355 aa).

67–74 (GPESSGKT) is a binding site for ATP.

Belongs to the RecA family.

It is found in the cytoplasm. Functionally, can catalyze the hydrolysis of ATP in the presence of single-stranded DNA, the ATP-dependent uptake of single-stranded DNA by duplex DNA, and the ATP-dependent hybridization of homologous single-stranded DNAs. It interacts with LexA causing its activation and leading to its autocatalytic cleavage. This chain is Protein RecA, found in Histophilus somni (strain 2336) (Haemophilus somnus).